The following is a 101-amino-acid chain: Protein RnfH (101 aa).

Belongs to the UPF0125 (RnfH) family.

The polypeptide is Protein RnfH (Coxiella burnetii (strain CbuK_Q154) (Coxiella burnetii (strain Q154))).